Consider the following 552-residue polypeptide: Urocanate hydratase (552 aa).

Residues 49–50 (GG), glutamine 127, 173–175 (GMG), aspartate 193, 239–240 (NA), 260–264 (QTSAH), 270–271 (YI), and tyrosine 319 each bind NAD(+). Residue cysteine 407 is part of the active site. An NAD(+)-binding site is contributed by glycine 489.

This sequence belongs to the urocanase family. Requires NAD(+) as cofactor.

The protein resides in the cytoplasm. It catalyses the reaction 4-imidazolone-5-propanoate = trans-urocanate + H2O. Its pathway is amino-acid degradation; L-histidine degradation into L-glutamate; N-formimidoyl-L-glutamate from L-histidine: step 2/3. In terms of biological role, catalyzes the conversion of urocanate to 4-imidazolone-5-propionate. The polypeptide is Urocanate hydratase (Bacillus cereus (strain ATCC 14579 / DSM 31 / CCUG 7414 / JCM 2152 / NBRC 15305 / NCIMB 9373 / NCTC 2599 / NRRL B-3711)).